We begin with the raw amino-acid sequence, 304 residues long: Glutaminase (304 aa).

Residues Ser63, Asn114, Glu158, Asn165, Tyr189, Tyr240, and Val258 each contribute to the substrate site.

The protein belongs to the glutaminase family. As to quaternary structure, homotetramer.

It catalyses the reaction L-glutamine + H2O = L-glutamate + NH4(+). The polypeptide is Glutaminase (Shewanella baltica (strain OS185)).